The primary structure comprises 247 residues: Chloride intracellular channel protein 2 (247 aa).

The segment at 1–94 (MSGLRPGTQV…KIEEFLEQTL (94 aa)) is N-terminal. Residues 1–96 (MSGLRPGTQV…EEFLEQTLAP (96 aa)) are required for insertion into the membrane. E25 provides a ligand contact to glutathione. Residues 30 to 33 (CPFC) carry the G-site motif. Cysteines 30 and 33 form a disulfide. The chain crosses the membrane as a helical span at residues 32–52 (FCQRLFMILWLKGVKFNVTTV). A GST C-terminal domain is found at 76–239 (NKELKTDFIK…PEDKEIENTY (164 aa)). The segment at 95–106 (APPRYPHLSPKY) is joint loop. Positions 107 to 247 (KESFDVGCNL…TYANVAKQKS (141 aa)) are C-terminal. Positions 151 to 171 (NTPLLDEIDPDSAEEPPVSRR) are foot loop. H227 is a glutathione binding site.

Belongs to the chloride channel CLIC family. As to quaternary structure, monomer. Interacts with TRAPPC2 and RYR2. As to expression, expressed in adult and fetal brain, heart, skeletal muscle, liver, lung, and spleen. Detected in adult stomach and testis. Expressed in fetal thymus and kidney.

It is found in the cytoplasm. The protein resides in the membrane. The enzyme catalyses chloride(in) = chloride(out). It carries out the reaction tert-butyl hydroperoxide + 2 glutathione = tert-butanol + glutathione disulfide + H2O. The catalysed reaction is cumene hydroperoxide + 2 glutathione = 2-phenylpropan-2-ol + glutathione disulfide + H2O. The channel conductance is regulated by pH. Its function is as follows. In the soluble state, catalyzes glutaredoxin-like thiol disulfide exchange reactions with reduced glutathione as electron donor. Displays weak glutathione peroxidase activity. Can insert into membranes and form chloride ion channels. Membrane insertion seems to be redox-regulated and may occur only under oxidizing conditions. Modulates the activity of RYR2 and inhibits calcium influx. The polypeptide is Chloride intracellular channel protein 2 (Homo sapiens (Human)).